A 238-amino-acid chain; its full sequence is Cell division protein A (238 aa).

In terms of assembly, interacts with CdvB.

The protein localises to the cytoplasm. Its subcellular location is the nucleoid. It is found in the cell membrane. Part of a cell division machinery. The CdvA, CdvB and CdvC proteins polymerize between segregating nucleoids and persist throughout cell division, forming a successively smaller structure during constriction. CdvA is a membrane interacting protein that recruits ESCRT-III homologs to the membrane. The sequence is that of Cell division protein A from Sulfolobus acidocaldarius (strain ATCC 33909 / DSM 639 / JCM 8929 / NBRC 15157 / NCIMB 11770).